A 644-amino-acid polypeptide reads, in one-letter code: MYKIYSYLGWRIDMKTENLPQAGQEAQIDKKIHFIWVGHIMPQKNIQVVSEWAEKNPGYETIIWVDKKIAPAKELDLFILDMKSKGITVKDINEEGVCRDSIRHELDQESPNYGMVSDMLRLNILAAEGGIYLDSDILCSAPFPDEIYAPFGFLLSPWSQGANNTLCNDIILCSKGNQIIQQLADAIEQSYIARDSFEFTHEYASMKETKGERIAKTLGVTGPGFLFHQLKKMGILNDKSEMEAIHWELQDQRYLIDGSVKEPDYFYVPQNNTNDASWVPSIKRPGIENMSFQERLENAVQLIAFDIQKTGLFNLDHYANELKVKQNSWCIAAETSPELKPDSYLLIRPRDKTGEWTLYYVDEDKKLNPVTLPVIKGAIKLSEVSDPLRKFHTLLSQVSDPVNPTAHELKQIGRALIELKPRQDEWHCKNKWSGAEEIAQELWQRITSNETLRAQIKQCFTQFESLKPRVAELGLTRASGAGTEVEAHESTVKEQEIISQNTVGEEGTKEKNSVQLASENSSDEKIKTAHDLIDEIIQDVIQLDGKLGLLGGNTRQLEDGRVINIPNGAAMIFDDYKKYKQGELTAESALESMIKIAKLSNQLNRHTFFNQRQPETGQFYKKVAAIDLQTTIAAEYDNNHGLRI.

The segment at 1-400 (MYKIYSYLGW…FHTLLSQVSD (400 aa)) is glucosyltransferase. The interval 401 to 644 (PVNPTAHELK…EYDNNHGLRI (244 aa)) is ptdIns(3)P-binding and localization domain.

Ubiquitinated and polyubiquitinated when ectopically produced in both yeast and mammalian cells; however it is unsure if this modification occurs during the L.pneumophila infection of host cells.

The protein localises to the secreted. Secreted effector that interferes with vesicular trafficking of host cells. Possesses glucohydrolase and mono-O-glucosyltransferase activity by using UDP-glucose as a sugar donor substrate. Is able to glucosylate histones H4 and H3.1 in vitro, but it is unlikely that histones are the natural substrates for SetA. May glycosylate a component of the host cell vesicle trafficking machinery during L.pneumophila infection. Binds with high specificity to phosphatidylinositol 3-phosphate (PtdIns(3)P), (with a dissociation constant value of 809 nM), which guides SetA to the cytosolic leaflet of the early phagosome of the host cell. The polypeptide is Subversion of eukaryotic traffic protein A (setA) (Legionella pneumophila subsp. pneumophila (strain Philadelphia 1 / ATCC 33152 / DSM 7513)).